We begin with the raw amino-acid sequence, 151 residues long: Protein NrdI (151 aa).

It belongs to the NrdI family.

Functionally, probably involved in ribonucleotide reductase function. The protein is Protein NrdI of Mycoplasmopsis pulmonis (strain UAB CTIP) (Mycoplasma pulmonis).